Reading from the N-terminus, the 311-residue chain is Putative dihydroorotate dehydrogenase A (fumarate) (311 aa).

Residues K45, 69–73 (NSMGL), and N128 each bind substrate. Position 45–46 (45–46 (KT)) interacts with FMN. Position 128 (N128) interacts with FMN. C131 functions as the Nucleophile in the catalytic mechanism. Residues K165 and V193 each contribute to the FMN site. Substrate is bound at residue 194 to 195 (NS). FMN-binding positions include G220, 248-249 (GG), and 270-271 (GT).

Belongs to the dihydroorotate dehydrogenase family. Type 1 subfamily. Homodimer. The cofactor is FMN.

The protein resides in the cytoplasm. It catalyses the reaction (S)-dihydroorotate + fumarate = orotate + succinate. The protein operates within pyrimidine metabolism; UMP biosynthesis via de novo pathway. Catalyzes the conversion of dihydroorotate to orotate with fumarate as the electron acceptor. This Streptococcus pyogenes serotype M1 protein is Putative dihydroorotate dehydrogenase A (fumarate) (pyrD).